A 468-amino-acid polypeptide reads, in one-letter code: ATP synthase subunit beta (468 aa).

Position 155–162 (155–162 (GGAGVGKT)) interacts with ATP.

The protein belongs to the ATPase alpha/beta chains family. F-type ATPases have 2 components, CF(1) - the catalytic core - and CF(0) - the membrane proton channel. CF(1) has five subunits: alpha(3), beta(3), gamma(1), delta(1), epsilon(1). CF(0) has three main subunits: a(1), b(2) and c(9-12). The alpha and beta chains form an alternating ring which encloses part of the gamma chain. CF(1) is attached to CF(0) by a central stalk formed by the gamma and epsilon chains, while a peripheral stalk is formed by the delta and b chains.

It localises to the cell inner membrane. It carries out the reaction ATP + H2O + 4 H(+)(in) = ADP + phosphate + 5 H(+)(out). Produces ATP from ADP in the presence of a proton gradient across the membrane. The catalytic sites are hosted primarily by the beta subunits. In Thermotoga neapolitana (strain ATCC 49049 / DSM 4359 / NBRC 107923 / NS-E), this protein is ATP synthase subunit beta.